A 295-amino-acid chain; its full sequence is Sperm acrosome membrane-associated protein 1 (295 aa).

An N-terminal signal peptide occupies residues 1–29; the sequence is MSPGGAGCSAGLLLTVGWLLLAGLQSTCG. Residues 30–220 are Extracellular-facing; the sequence is INVTAVQDPS…SRPDTDAVLV (191 aa). The interval 39-71 is disordered; that stretch reads SLVSEGENEGEEEAENDSEVENEPQAEAEQDVS. A compositionally biased stretch (acidic residues) spans 44-68; it reads GENEGEEEAENDSEVENEPQAEAEQ. N-linked (GlcNAc...) asparagine glycosylation is present at Asn72. Residues 221–241 form a helical membrane-spanning segment; it reads FVLTIGVIICIFVIFVLIFII. Over 242–295 the chain is Cytoplasmic; sequence VNWATVKDFWASKASTTEIQSELSSMKYKDSTSLDQSPTEIPGHEDDALSEWNE. Phosphoserine is present on Ser256. Residues 263-295 are disordered; that stretch reads ELSSMKYKDSTSLDQSPTEIPGHEDDALSEWNE. A Phosphotyrosine modification is found at Tyr269. Residues Ser278 and Ser291 each carry the phosphoserine modification.

Interacts with CYLC1; the interaction may be relevant for proper acrosome attachment to the nuclear envelope. In terms of processing, N-glycosylated. In terms of tissue distribution, detected in spermatozoa (at protein level).

It localises to the cytoplasmic vesicle. The protein localises to the secretory vesicle. Its subcellular location is the acrosome inner membrane. In terms of biological role, plays a role in acrosome expansion and establishment of normal sperm morphology during spermatogenesis. Important for male fertility. The chain is Sperm acrosome membrane-associated protein 1 from Sus scrofa (Pig).